Reading from the N-terminus, the 219-residue chain is MSRISKEEMSKLLSVYFIMGSNNCTKDPLQVLREALEGGITIFQFREKGEGALTGEERICFAKELQAICKEYGVPFIVNDDVELALELDADGVHVGQDDEGITSVREKMGDKIVGVSTHTIEEARWAIENGADYLGVGPIFPTSTKKDTKAVQGTKGLAHFREQGITIPIVGIGGISIENTASVIEAGADGVSVISAISLAESSYESTKKLVEEVSRSL.

Residues 44–48 and Asn79 each bind 4-amino-2-methyl-5-(diphosphooxymethyl)pyrimidine; that span reads QFREK. Mg(2+) contacts are provided by Asp80 and Asp99. Ser117 contacts 4-amino-2-methyl-5-(diphosphooxymethyl)pyrimidine. Residue 143 to 145 coordinates 2-[(2R,5Z)-2-carboxy-4-methylthiazol-5(2H)-ylidene]ethyl phosphate; the sequence is TST. A 4-amino-2-methyl-5-(diphosphooxymethyl)pyrimidine-binding site is contributed by Lys146. 2-[(2R,5Z)-2-carboxy-4-methylthiazol-5(2H)-ylidene]ethyl phosphate-binding positions include Gly175 and 195–196; that span reads IS.

The protein belongs to the thiamine-phosphate synthase family. Requires Mg(2+) as cofactor.

It carries out the reaction 2-[(2R,5Z)-2-carboxy-4-methylthiazol-5(2H)-ylidene]ethyl phosphate + 4-amino-2-methyl-5-(diphosphooxymethyl)pyrimidine + 2 H(+) = thiamine phosphate + CO2 + diphosphate. The catalysed reaction is 2-(2-carboxy-4-methylthiazol-5-yl)ethyl phosphate + 4-amino-2-methyl-5-(diphosphooxymethyl)pyrimidine + 2 H(+) = thiamine phosphate + CO2 + diphosphate. The enzyme catalyses 4-methyl-5-(2-phosphooxyethyl)-thiazole + 4-amino-2-methyl-5-(diphosphooxymethyl)pyrimidine + H(+) = thiamine phosphate + diphosphate. The protein operates within cofactor biosynthesis; thiamine diphosphate biosynthesis; thiamine phosphate from 4-amino-2-methyl-5-diphosphomethylpyrimidine and 4-methyl-5-(2-phosphoethyl)-thiazole: step 1/1. Condenses 4-methyl-5-(beta-hydroxyethyl)thiazole monophosphate (THZ-P) and 2-methyl-4-amino-5-hydroxymethyl pyrimidine pyrophosphate (HMP-PP) to form thiamine monophosphate (TMP). The sequence is that of Thiamine-phosphate synthase from Bacillus cereus (strain 03BB102).